A 351-amino-acid chain; its full sequence is Phospho-N-acetylmuramoyl-pentapeptide-transferase (351 aa).

Transmembrane regions (helical) follow at residues 22–42, 65–85, 87–107, 128–148, 158–178, 190–210, 225–245, 254–274, 279–299, and 328–348; these read ILAF…FISW, TPTM…LITT, FNKY…LGFI, FLLQ…VGFD, YPIF…IVAM, GLAT…LYIV, LGVG…LGFL, VFMG…LAIV, LLLI…ILQV, and KITI…ILSI.

The protein belongs to the glycosyltransferase 4 family. MraY subfamily. The cofactor is Mg(2+).

The protein resides in the cell inner membrane. The catalysed reaction is UDP-N-acetyl-alpha-D-muramoyl-L-alanyl-gamma-D-glutamyl-meso-2,6-diaminopimeloyl-D-alanyl-D-alanine + di-trans,octa-cis-undecaprenyl phosphate = di-trans,octa-cis-undecaprenyl diphospho-N-acetyl-alpha-D-muramoyl-L-alanyl-D-glutamyl-meso-2,6-diaminopimeloyl-D-alanyl-D-alanine + UMP. The protein operates within cell wall biogenesis; peptidoglycan biosynthesis. In terms of biological role, catalyzes the initial step of the lipid cycle reactions in the biosynthesis of the cell wall peptidoglycan: transfers peptidoglycan precursor phospho-MurNAc-pentapeptide from UDP-MurNAc-pentapeptide onto the lipid carrier undecaprenyl phosphate, yielding undecaprenyl-pyrophosphoryl-MurNAc-pentapeptide, known as lipid I. In Nautilia profundicola (strain ATCC BAA-1463 / DSM 18972 / AmH), this protein is Phospho-N-acetylmuramoyl-pentapeptide-transferase.